Here is a 171-residue protein sequence, read N- to C-terminus: Dual specificity protein phosphatase OPG106 (171 aa).

A dimerization region spans residues 1–27 (MDKKSLYKYLLLRSTGDMHKAKSPTIM). In terms of domain architecture, Tyrosine-protein phosphatase spans 23-171 (SPTIMTRVTN…IIEKYVIDKN (149 aa)). The Phosphocysteine intermediate role is filled by Cys110.

Belongs to the protein-tyrosine phosphatase family. Non-receptor class dual specificity subfamily. In terms of assembly, homodimer.

It is found in the virion. Its subcellular location is the host cytoplasm. The catalysed reaction is O-phospho-L-tyrosyl-[protein] + H2O = L-tyrosyl-[protein] + phosphate. The enzyme catalyses O-phospho-L-seryl-[protein] + H2O = L-seryl-[protein] + phosphate. Its function is as follows. Serine/tyrosine phosphatase which down-regulates cellular antiviral response by dephosphorylating activated host STAT1 and blocking interferon (IFN)-stimulated innate immune responses. Dephosphorylates the OPG144 protein. The sequence is that of Dual specificity protein phosphatase OPG106 (OPG106) from Bos taurus (Bovine).